Here is a 415-residue protein sequence, read N- to C-terminus: Zona pellucida-like domain-containing protein 1 (415 aa).

The signal sequence occupies residues 1 to 19; the sequence is MERVWLLFLLAIRVSPGSA. Topologically, residues 20 to 373 are extracellular; that stretch reads QFNSYNCDAN…PFQLNAVTSS (354 aa). The region spanning 43–320 is the ZP domain; that stretch reads YCGVQAITMK…PICGNRKRRD (278 aa). 2 disulfide bridges follow: cysteine 44–cysteine 155 and cysteine 79–cysteine 104. Asparagine 164 is a glycosylation site (N-linked (GlcNAc...) asparagine). Intrachain disulfides connect cysteine 235/cysteine 296 and cysteine 255/cysteine 313. A helical membrane pass occupies residues 374–394; that stretch reads LISGMVILGVLCFSLLLCSLA. At 395–415 the chain is on the cytoplasmic side; it reads LLHRKGSTSLVLNGVRNPVFE.

Proteolytically cleaved before the transmembrane segment to yield the secreted form found in the extracellular matrix of the cupula.

The protein localises to the cytoplasmic vesicle membrane. It localises to the secreted. Its subcellular location is the extracellular space. It is found in the extracellular matrix. Its function is as follows. Glycoprotein which is a component of the gelatinous extracellular matrix in the cupulae of the vestibular organ. In Mus musculus (Mouse), this protein is Zona pellucida-like domain-containing protein 1 (Zpld1).